We begin with the raw amino-acid sequence, 89 residues long: Small ribosomal subunit protein uS15 (89 aa).

The protein belongs to the universal ribosomal protein uS15 family. Part of the 30S ribosomal subunit. Forms a bridge to the 50S subunit in the 70S ribosome, contacting the 23S rRNA.

Functionally, one of the primary rRNA binding proteins, it binds directly to 16S rRNA where it helps nucleate assembly of the platform of the 30S subunit by binding and bridging several RNA helices of the 16S rRNA. Its function is as follows. Forms an intersubunit bridge (bridge B4) with the 23S rRNA of the 50S subunit in the ribosome. This is Small ribosomal subunit protein uS15 from Leuconostoc citreum (strain KM20).